The sequence spans 337 residues: Protein hairy (337 aa).

The tract at residues 29–48 (KSDRRSNKPIMEKRRRARIN) is interaction with Topors. The bHLH domain maps to 31–88 (DRRSNKPIMEKRRRARINNCLNELKTLILDATKKDPARHSKLEKADILEKTVKHLQEL). The Orange domain occupies 107-136 (FKAGFADCVNEVSRFPGIEPAQRRRLLQHL). Disordered stretches follow at residues 146–178 (ELHQQQRQQQQQSIHAQMLPSPPSSPEQDSQQG) and 259–311 (MPQR…VIQR). A compositionally biased stretch (low complexity) spans 263-301 (TASTGSASSHSSAGYESAPGSSSSCSYAPPSPANSSYEP). The WRPW motif motif lies at 334 to 337 (WRPW).

Transcription repression requires formation of a complex with a corepressor protein (Groucho). Interacts with gro (via WPRW motif) and Topors. In terms of processing, ubiquitinated by Topors.

It is found in the nucleus. In terms of biological role, pair-rule protein that regulates embryonic segmentation and adult bristle patterning. Transcriptional repressor of genes that require a bHLH protein for their transcription (e.g. ftz). The polypeptide is Protein hairy (Drosophila melanogaster (Fruit fly)).